The sequence spans 140 residues: Nucleoside diphosphate kinase (140 aa).

ATP-binding residues include lysine 11, phenylalanine 59, arginine 87, threonine 93, arginine 104, and asparagine 114. Histidine 117 functions as the Pros-phosphohistidine intermediate in the catalytic mechanism.

It belongs to the NDK family. In terms of assembly, homotetramer. Mg(2+) is required as a cofactor.

It is found in the cytoplasm. It carries out the reaction a 2'-deoxyribonucleoside 5'-diphosphate + ATP = a 2'-deoxyribonucleoside 5'-triphosphate + ADP. The catalysed reaction is a ribonucleoside 5'-diphosphate + ATP = a ribonucleoside 5'-triphosphate + ADP. Major role in the synthesis of nucleoside triphosphates other than ATP. The ATP gamma phosphate is transferred to the NDP beta phosphate via a ping-pong mechanism, using a phosphorylated active-site intermediate. The protein is Nucleoside diphosphate kinase of Cereibacter sphaeroides (strain ATCC 17029 / ATH 2.4.9) (Rhodobacter sphaeroides).